A 64-amino-acid polypeptide reads, in one-letter code: Large ribosomal subunit protein bL35 (64 aa).

The protein belongs to the bacterial ribosomal protein bL35 family.

The polypeptide is Large ribosomal subunit protein bL35 (Acinetobacter baumannii (strain AB307-0294)).